We begin with the raw amino-acid sequence, 165 residues long: Inorganic pyrophosphatase (165 aa).

Lys-21, Arg-35, and Tyr-47 together coordinate substrate. Residues Asp-57, Asp-62, and Asp-94 each coordinate Mg(2+). A substrate-binding site is contributed by Tyr-131.

The protein belongs to the PPase family. In terms of assembly, homohexamer. Mg(2+) serves as cofactor.

The protein localises to the cytoplasm. It catalyses the reaction diphosphate + H2O = 2 phosphate + H(+). In terms of biological role, catalyzes the hydrolysis of inorganic pyrophosphate (PPi) forming two phosphate ions. The polypeptide is Inorganic pyrophosphatase (Geobacillus stearothermophilus (Bacillus stearothermophilus)).